The chain runs to 533 residues: (E)-beta-farnesene synthase (533 aa).

Asp-286, Asp-290, Asn-430, Ser-434, and Glu-438 together coordinate Mg(2+). The short motif at 286–290 is the DDXXD motif element; that stretch reads DDMMD.

Belongs to the terpene synthase family. Requires Mg(2+) as cofactor. Co(2+) is required as a cofactor. Mn(2+) serves as cofactor.

Its subcellular location is the cytoplasm. It catalyses the reaction (2E,6E)-farnesyl diphosphate = (E)-beta-farnesene + diphosphate. Its pathway is secondary metabolite biosynthesis; terpenoid biosynthesis. Sesquiterpene cyclase catalyzing the production of sixfold more beta-farnesene than alpha-bergamotene from farnesyl diphosphate. Involved in indirect defense by producing volatile signals attracting natural enemies of herbivores. This Zea diploperennis (Diploperennial teosinte) protein is (E)-beta-farnesene synthase.